The chain runs to 452 residues: Low-affinity putrescine importer PlaP (452 aa).

The Cytoplasmic portion of the chain corresponds to 1–16 (MSHNVTPNTSRVELRK). A helical transmembrane segment spans residues 17 to 37 (TLTLVPVVMMGLAYMQPMTLF). The Periplasmic portion of the chain corresponds to 38 to 48 (DTFGIVSGLTD). Residues 49–69 (GHVPTAYAFALIAILFTALSY) form a helical membrane-spanning segment. The Cytoplasmic segment spans residues 70-95 (GKLVRRYPSAGSAYTYAQKSISPTVG). A helical membrane pass occupies residues 96–116 (FMVGWSSLLDYLFAPMINILL). Residues 117–123 (AKIYFEA) are Periplasmic-facing. The helical transmembrane segment at 124–144 (LVPSIPSWMFVVALVAFMTAF) threads the bilayer. Residues 145–158 (NLRSLKSVANFNTV) are Cytoplasmic-facing. Residues 159-179 (IVVLQVVLIAVILGMVVYGVF) traverse the membrane as a helical segment. Topologically, residues 180 to 199 (EGEGAGTLASTRPFWSGDAH) are periplasmic. Residues 200-220 (VIPMITGATILCFSFTGFDGI) form a helical membrane-spanning segment. Topologically, residues 221–237 (SNLSEETKDAERVIPRA) are cytoplasmic. Residues 238 to 258 (IFLTALIGGMIFIFATYFLQL) traverse the membrane as a helical segment. Residues 259–283 (YFPDISRFKDPDASQPEIMLYVAGK) lie on the Periplasmic side of the membrane. Residues 284–304 (AFQVGALIFSTITVLASGMAA) form a helical membrane-spanning segment. At 305-339 (HAGVARLMYVMGRDGVFPKSFFGYVHPKWRTPAMN) the chain is on the cytoplasmic side. The next 2 membrane-spanning stretches (helical) occupy residues 340–360 (IILV…MATA) and 361–381 (LINF…ISQF). The Cytoplasmic portion of the chain corresponds to 382 to 394 (WIREKRNKTLKDH). Residues 395-415 (FQYLFLPMCGALTVGALWVNL) form a helical membrane-spanning segment. Residues 416 to 417 (EE) are Periplasmic-facing. Residues 418 to 438 (SSMVLGLIWAAIGLIYLACVT) traverse the membrane as a helical segment. Residues 439-452 (KSFRNPVPQYEDVA) lie on the Cytoplasmic side of the membrane.

Belongs to the amino acid-polyamine-organocation (APC) superfamily.

It is found in the cell inner membrane. The enzyme catalyses putrescine(in) + H(+)(in) = putrescine(out) + H(+)(out). Its function is as follows. Putrescine importer. The polypeptide is Low-affinity putrescine importer PlaP (plaP) (Escherichia coli O157:H7).